The chain runs to 102 residues: Small ribosomal subunit protein uS10 (102 aa).

Belongs to the universal ribosomal protein uS10 family. In terms of assembly, part of the 30S ribosomal subunit.

Its function is as follows. Involved in the binding of tRNA to the ribosomes. This chain is Small ribosomal subunit protein uS10, found in Rhodospirillum rubrum (strain ATCC 11170 / ATH 1.1.1 / DSM 467 / LMG 4362 / NCIMB 8255 / S1).